Consider the following 479-residue polypeptide: UDP-N-acetylmuramate--L-alanine ligase (479 aa).

An ATP-binding site is contributed by 114 to 120 (GTHGKTT).

Belongs to the MurCDEF family.

It localises to the cytoplasm. The enzyme catalyses UDP-N-acetyl-alpha-D-muramate + L-alanine + ATP = UDP-N-acetyl-alpha-D-muramoyl-L-alanine + ADP + phosphate + H(+). It functions in the pathway cell wall biogenesis; peptidoglycan biosynthesis. Functionally, cell wall formation. This chain is UDP-N-acetylmuramate--L-alanine ligase, found in Pelodictyon phaeoclathratiforme (strain DSM 5477 / BU-1).